The chain runs to 207 residues: Ribosomal RNA small subunit methyltransferase G (207 aa).

Residues glycine 75, leucine 80, 126–127 (VE), and arginine 141 each bind S-adenosyl-L-methionine.

This sequence belongs to the methyltransferase superfamily. RNA methyltransferase RsmG family.

The protein localises to the cytoplasm. The enzyme catalyses guanosine(527) in 16S rRNA + S-adenosyl-L-methionine = N(7)-methylguanosine(527) in 16S rRNA + S-adenosyl-L-homocysteine. Functionally, specifically methylates the N7 position of guanine in position 527 of 16S rRNA. The polypeptide is Ribosomal RNA small subunit methyltransferase G (Psychromonas ingrahamii (strain DSM 17664 / CCUG 51855 / 37)).